A 466-amino-acid polypeptide reads, in one-letter code: ATP synthase subunit beta (466 aa).

156-163 contacts ATP; the sequence is GGAGVGKT.

It belongs to the ATPase alpha/beta chains family. In terms of assembly, F-type ATPases have 2 components, CF(1) - the catalytic core - and CF(0) - the membrane proton channel. CF(1) has five subunits: alpha(3), beta(3), gamma(1), delta(1), epsilon(1). CF(0) has three main subunits: a(1), b(2) and c(9-12). The alpha and beta chains form an alternating ring which encloses part of the gamma chain. CF(1) is attached to CF(0) by a central stalk formed by the gamma and epsilon chains, while a peripheral stalk is formed by the delta and b chains.

It localises to the cell inner membrane. It carries out the reaction ATP + H2O + 4 H(+)(in) = ADP + phosphate + 5 H(+)(out). Produces ATP from ADP in the presence of a proton gradient across the membrane. The catalytic sites are hosted primarily by the beta subunits. The polypeptide is ATP synthase subunit beta (Polynucleobacter necessarius subsp. necessarius (strain STIR1)).